A 376-amino-acid chain; its full sequence is Phytanoyl-CoA hydroxylase interacting protein-like (376 aa).

A phosphoserine mark is found at serine 12 and serine 15. Asparagine 23 carries N-linked (GlcNAc...) asparagine glycosylation. Phosphoserine is present on serine 25. Asparagine 37 carries N-linked (GlcNAc...) asparagine glycosylation. The Fibronectin type-III domain maps to 52–161; sequence VPRNIKISNI…EIIEFCTADY (110 aa).

This sequence belongs to the PHYHIP family.

In terms of biological role, may play a role in the development of the central system. This chain is Phytanoyl-CoA hydroxylase interacting protein-like (PHYHIPL), found in Bos taurus (Bovine).